Reading from the N-terminus, the 364-residue chain is Fructose-1,6-bisphosphatase class 1 2 (364 aa).

Residues glutamate 101, aspartate 123, leucine 125, and aspartate 126 each coordinate Mg(2+). Substrate is bound by residues 126 to 129 and asparagine 218; that span reads DGSS. A Mg(2+)-binding site is contributed by glutamate 290.

This sequence belongs to the FBPase class 1 family. In terms of assembly, homotetramer. Mg(2+) serves as cofactor.

The protein localises to the cytoplasm. It carries out the reaction beta-D-fructose 1,6-bisphosphate + H2O = beta-D-fructose 6-phosphate + phosphate. It functions in the pathway carbohydrate biosynthesis; gluconeogenesis. In Cupriavidus necator (strain ATCC 17699 / DSM 428 / KCTC 22496 / NCIMB 10442 / H16 / Stanier 337) (Ralstonia eutropha), this protein is Fructose-1,6-bisphosphatase class 1 2.